The following is a 185-amino-acid chain: Elongation factor P (185 aa).

Belongs to the elongation factor P family.

The protein localises to the cytoplasm. It participates in protein biosynthesis; polypeptide chain elongation. Functionally, involved in peptide bond synthesis. Stimulates efficient translation and peptide-bond synthesis on native or reconstituted 70S ribosomes in vitro. Probably functions indirectly by altering the affinity of the ribosome for aminoacyl-tRNA, thus increasing their reactivity as acceptors for peptidyl transferase. This Herpetosiphon aurantiacus (strain ATCC 23779 / DSM 785 / 114-95) protein is Elongation factor P.